The chain runs to 133 residues: UPF0102 protein Fnod_1509 (133 aa).

Belongs to the UPF0102 family.

The chain is UPF0102 protein Fnod_1509 from Fervidobacterium nodosum (strain ATCC 35602 / DSM 5306 / Rt17-B1).